A 341-amino-acid polypeptide reads, in one-letter code: S-adenosylmethionine:tRNA ribosyltransferase-isomerase (341 aa).

Belongs to the QueA family. In terms of assembly, monomer.

The protein localises to the cytoplasm. It catalyses the reaction 7-aminomethyl-7-carbaguanosine(34) in tRNA + S-adenosyl-L-methionine = epoxyqueuosine(34) in tRNA + adenine + L-methionine + 2 H(+). The protein operates within tRNA modification; tRNA-queuosine biosynthesis. In terms of biological role, transfers and isomerizes the ribose moiety from AdoMet to the 7-aminomethyl group of 7-deazaguanine (preQ1-tRNA) to give epoxyqueuosine (oQ-tRNA). This Staphylococcus aureus (strain USA300) protein is S-adenosylmethionine:tRNA ribosyltransferase-isomerase.